The primary structure comprises 347 residues: Intracellular hyaluronan-binding protein 4 (347 aa).

Disordered stretches follow at residues 39–221 (GTEK…PSET) and 298–347 (FGSL…PALA). 4 stretches are compositionally biased toward basic and acidic residues: residues 61-71 (VKKESQRDRKT), 83-107 (PGHE…DAEK), 116-125 (RPVDVLDRPA), and 146-174 (DGFD…EKRS). A compositionally biased stretch (acidic residues) spans 199 to 213 (EVTENEETQEAVETD). Over residues 307 to 319 (GGRGGRGGRGRGG) the composition is skewed to gly residues. Residues 338–347 (DDPEDFPALA) show a composition bias toward acidic residues.

The protein belongs to the SERBP1-HABP4 family. As to quaternary structure, associates with ribosomes; promoting ribosome stabilization. Interacts with eef2/eEF2; promoting ribosome stabilization.

The protein resides in the nucleus. It localises to the cytoplasm. It is found in the stress granule. Its subcellular location is the nucleolus. The protein localises to the nucleus speckle. The protein resides in the cajal body. Its function is as follows. Ribosome-binding protein that promotes ribosome hibernation, a process during which ribosomes are stabilized in an inactive state and preserved from proteasomal degradation. Acts via its association with eef2/eEF2 factor at the A-site of the ribosome, promoting ribosome stabilization in an inactive state compatible with storage. Plays a key role in ribosome hibernation in the mature egg by promoting ribosome stabilization. Ribosomes, which are produced in large quantities during oogenesis, are stored and translationally repressed in the egg and early embryo. The sequence is that of Intracellular hyaluronan-binding protein 4 from Danio rerio (Zebrafish).